We begin with the raw amino-acid sequence, 209 residues long: Ribosomal RNA large subunit methyltransferase E (209 aa).

5 residues coordinate S-adenosyl-L-methionine: Gly63, Trp65, Asp83, Asp99, and Asp124. Lys164 functions as the Proton acceptor in the catalytic mechanism. Residues 191 to 209 (EASRGRSREVYIVAMGYMG) enclose the TRAM domain.

Belongs to the class I-like SAM-binding methyltransferase superfamily. RNA methyltransferase RlmE family.

It is found in the cytoplasm. The catalysed reaction is uridine(2552) in 23S rRNA + S-adenosyl-L-methionine = 2'-O-methyluridine(2552) in 23S rRNA + S-adenosyl-L-homocysteine + H(+). Functionally, specifically methylates the uridine in position 2552 of 23S rRNA at the 2'-O position of the ribose in the fully assembled 50S ribosomal subunit. The sequence is that of Ribosomal RNA large subunit methyltransferase E from Histophilus somni (strain 129Pt) (Haemophilus somnus).